Here is a 364-residue protein sequence, read N- to C-terminus: UDP-N-acetylglucosamine--N-acetylmuramyl-(pentapeptide) pyrophosphoryl-undecaprenol N-acetylglucosamine transferase (364 aa).

Residues 13–15 (TGG), N125, R165, S192, and Q293 each bind UDP-N-acetyl-alpha-D-glucosamine.

The protein belongs to the glycosyltransferase 28 family. MurG subfamily.

Its subcellular location is the cell inner membrane. It catalyses the reaction di-trans,octa-cis-undecaprenyl diphospho-N-acetyl-alpha-D-muramoyl-L-alanyl-D-glutamyl-meso-2,6-diaminopimeloyl-D-alanyl-D-alanine + UDP-N-acetyl-alpha-D-glucosamine = di-trans,octa-cis-undecaprenyl diphospho-[N-acetyl-alpha-D-glucosaminyl-(1-&gt;4)]-N-acetyl-alpha-D-muramoyl-L-alanyl-D-glutamyl-meso-2,6-diaminopimeloyl-D-alanyl-D-alanine + UDP + H(+). It functions in the pathway cell wall biogenesis; peptidoglycan biosynthesis. Its function is as follows. Cell wall formation. Catalyzes the transfer of a GlcNAc subunit on undecaprenyl-pyrophosphoryl-MurNAc-pentapeptide (lipid intermediate I) to form undecaprenyl-pyrophosphoryl-MurNAc-(pentapeptide)GlcNAc (lipid intermediate II). This is UDP-N-acetylglucosamine--N-acetylmuramyl-(pentapeptide) pyrophosphoryl-undecaprenol N-acetylglucosamine transferase from Cereibacter sphaeroides (strain ATCC 17029 / ATH 2.4.9) (Rhodobacter sphaeroides).